Here is a 157-residue protein sequence, read N- to C-terminus: uncharacterized protein (157 aa).

The first 19 residues, 1-19, serve as a signal peptide directing secretion; sequence MRKYLIILVLLLFLSSSFG.

This is an uncharacterized protein from Methanocaldococcus jannaschii (strain ATCC 43067 / DSM 2661 / JAL-1 / JCM 10045 / NBRC 100440) (Methanococcus jannaschii).